The following is an 872-amino-acid chain: Probable GPI-anchored adhesin-like protein PGA25 (872 aa).

The N-terminal stretch at 1-19 is a signal peptide; that stretch reads MKVTAVSSVLLTVAALTNA. Positions 43–65 are enriched in low complexity; that stretch reads PAAAPAAQPAAQPTTQSPADQPT. Disordered regions lie at residues 43–383, 492–517, and 623–809; these read PAAA…TIIP, KPTG…DETD, and PDDW…ECDT. Residues 66-83 show a composition bias toward polar residues; the sequence is VQSPVSSDQPSTAQPVAQ. Low complexity-rich tracts occupy residues 84 to 110 and 125 to 171; these read NNLL…TRST and SSEA…SSSS. Asn-92 carries an N-linked (GlcNAc...) asparagine glycan. Positions 196–207 are enriched in acidic residues; that stretch reads ETDDEDCVEETE. Low complexity-rich tracts occupy residues 208–225, 242–260, and 274–293; these read SPTS…VATT, SSAP…SSTT, and SSVP…NTTT. N-linked (GlcNAc...) asparagine glycosylation is present at Asn-290. The segment covering 317-328 has biased composition (acidic residues); sequence AEEDDEECEDPT. Over residues 349-363 the composition is skewed to low complexity; that stretch reads TSQSKTSVSSVVSKS. Positions 366-376 are enriched in acidic residues; it reads EDDDDETECET. Over residues 495–506 the composition is skewed to polar residues; the sequence is GSGSITVLPTKS. 2 stretches are compositionally biased toward acidic residues: residues 624-635 and 646-659; these read DDWEDDGYEGED and DDGE…DDGE. Gly residues-rich tracts occupy residues 666 to 692, 701 to 710, and 731 to 740; these read SSSG…GSGS, SSGGTWGGSG, and SWWGGSGSGS. The segment covering 741-760 has biased composition (low complexity); that stretch reads SSGSSSGVSSGDSGSSSVTG. Residues 761–771 are compositionally biased toward gly residues; it reads GSSGSWWGGSG. The span at 780–808 shows a compositional bias: acidic residues; it reads DGYDDEDDQTPEPECDDEDDSWDDDEECD. Ala-845 carries GPI-anchor amidated alanine lipidation. The propeptide at 846 to 872 is removed in mature form; sequence QSVTQIENIGGKVSASGLFVVLGLLLI.

It belongs to the HYR1/IFF family. Post-translationally, the GPI-anchor is attached to the protein in the endoplasmic reticulum and serves to target the protein to the cell surface. There, the glucosamine-inositol phospholipid moiety is cleaved off and the GPI-modified mannoprotein is covalently attached via its lipidless GPI glycan remnant to the 1,6-beta-glucan of the outer cell wall layer.

The protein resides in the secreted. Its subcellular location is the cell wall. It localises to the membrane. Probable GPI-anchored cell wall protein involved in cell wall organization, hyphal growth, as well as in host-fungal interaction and virulence. This chain is Probable GPI-anchored adhesin-like protein PGA25 (PGA25), found in Candida albicans (strain SC5314 / ATCC MYA-2876) (Yeast).